A 621-amino-acid chain; its full sequence is MMRARFPLLLLGVVFLASVSVSFGIAYWEKQNPSHNKCLRSCNSEKDSYRNQACHARCNLLKVEEEEECEEGQIPRPRPQHPERERQQHGEKEEDEGEQPRPFPFPRPRQPHQEEEHEQKEEHEWHRKEEKHGGKGSEEEQDEREHPRPHQPHQKEEEKHEWQHKQEKHQGKESEEEEEDQDEDEEQDKESQESEGSESQREPRRHKNKNPFHFNSKRFQTLFKNQYGHVRVLQRFNKRSQQLQNLRDYRILEFNSKPNTLLLPHHADADYLIVILNGTAILTLVNNDDRDSYNLQSGDALRVPAGTTYYVVNPDNDENLRMITLAIPVNKPGRFESFFLSSTQAQQSYLQGFSKNILEASYDTKFEEINKVLFGREEGQQQGEERLQESVIVEISKKQIRELSKHAKSSSRKTISSEDKPFNLRSRDPIYSNKLGKLFEITPEKNPQLRDLDVFLSVVDMNEGALFLPHFNSKAIVVLVINEGEANIELVGIKEQQQRQQQEEQPLEVRKYRAELSEQDIFVIPAGYPVVVNATSDLNFFAFGINAENNQRNFLAGSKDNVISQIPSQVQELAFPGSAKDIENLIKSQSESYFVDAQPQQKEEGNKGRKGPLSSILRAFY.

The signal sequence occupies residues methionine 1–glycine 24. The propeptide occupies isoleucine 25 to lysine 62. Residues glutamate 64–phenylalanine 214 form a disordered region. 2 stretches are compositionally biased toward basic and acidic residues: residues glutamine 80 to lysine 92 and proline 111 to glutamate 173. Residues serine 174–glycine 196 are compositionally biased toward acidic residues. Cupin type-1 domains lie at phenylalanine 212 to asparagine 370 and phenylalanine 422 to glutamate 583. N-linked (GlcNAc...) asparagine glycans are attached at residues asparagine 277 and asparagine 533. The tract at residues proline 612–tyrosine 621 is necessary for sorting to protein storage vacuole.

The protein belongs to the 7S seed storage protein family. The alpha-, alpha'-, and beta-subunits associate in various combinations to form trimeric proteins.

The protein localises to the vacuole. The protein resides in the aleurone grain. It is found in the endoplasmic reticulum. Its subcellular location is the protein storage vacuole. Functionally, seed storage protein. Accumulates during seed development and is hydrolyzed after germination to provide a carbon and nitrogen source for the developing seedling. The polypeptide is Beta-conglycinin alpha' subunit (Glycine max (Soybean)).